Consider the following 71-residue polypeptide: Large ribosomal subunit protein bL31 (71 aa).

Zn(2+) contacts are provided by C16, C18, C37, and C40.

The protein belongs to the bacterial ribosomal protein bL31 family. Type A subfamily. Part of the 50S ribosomal subunit. The cofactor is Zn(2+).

Binds the 23S rRNA. The protein is Large ribosomal subunit protein bL31 of Mannheimia succiniciproducens (strain KCTC 0769BP / MBEL55E).